A 1100-amino-acid chain; its full sequence is Guanylate cyclase 2G (1100 aa).

Residues methionine 1–alanine 43 form the signal peptide. The Extracellular portion of the chain corresponds to alanine 44–alanine 481. N-linked (GlcNAc...) asparagine glycosylation is found at asparagine 55, asparagine 85, asparagine 94, asparagine 418, and asparagine 443. The helical transmembrane segment at valine 482–leucine 502 threads the bilayer. Topologically, residues tryptophan 503–leucine 1100 are cytoplasmic. Residues serine 549–leucine 826 form the Protein kinase domain. A Guanylate cyclase domain is found at threonine 901–glutamate 1031.

This sequence belongs to the adenylyl cyclase class-4/guanylyl cyclase family. Homooligomer. May interact with NPR1/GC-A. N-glycosylated. In terms of tissue distribution, expressed in lung, kidney and skeletal muscle. Low levels in intestine.

It is found in the cell membrane. Its subcellular location is the cytoplasm. The enzyme catalyses GTP = 3',5'-cyclic GMP + diphosphate. This chain is Guanylate cyclase 2G (Gucy2g), found in Rattus norvegicus (Rat).